Reading from the N-terminus, the 396-residue chain is S-adenosylmethionine synthase (396 aa).

ATP is bound at residue His16. Residue Asp18 participates in Mg(2+) binding. Residue Glu44 coordinates K(+). Glu57 and Gln100 together coordinate L-methionine. Residues 100 to 110 (QSVDIAQGVDR) are flexible loop. Residues 165–167 (DAK), 231–232 (KF), Asp240, 246–247 (RK), Ala263, and Lys267 contribute to the ATP site. Asp240 contacts L-methionine. Residue Lys271 participates in L-methionine binding.

The protein belongs to the AdoMet synthase family. Homotetramer; dimer of dimers. Mg(2+) is required as a cofactor. It depends on K(+) as a cofactor.

It is found in the cytoplasm. It carries out the reaction L-methionine + ATP + H2O = S-adenosyl-L-methionine + phosphate + diphosphate. Its pathway is amino-acid biosynthesis; S-adenosyl-L-methionine biosynthesis; S-adenosyl-L-methionine from L-methionine: step 1/1. Its function is as follows. Catalyzes the formation of S-adenosylmethionine (AdoMet) from methionine and ATP. The overall synthetic reaction is composed of two sequential steps, AdoMet formation and the subsequent tripolyphosphate hydrolysis which occurs prior to release of AdoMet from the enzyme. The sequence is that of S-adenosylmethionine synthase from Marinobacter nauticus (strain ATCC 700491 / DSM 11845 / VT8) (Marinobacter aquaeolei).